Here is a 346-residue protein sequence, read N- to C-terminus: DNA-directed RNA polymerase subunit alpha (346 aa).

The interval 1–233 is alpha N-terminal domain (alpha-NTD); the sequence is MLRDEVAVSA…DLFIPFLHAE (233 aa). The segment at 268 to 346 is alpha C-terminal domain (alpha-CTD); that stretch reads IELKCIFIDQ…NKFLIGNPSE (79 aa).

This sequence belongs to the RNA polymerase alpha chain family. In plastids the minimal PEP RNA polymerase catalytic core is composed of four subunits: alpha, beta, beta', and beta''. When a (nuclear-encoded) sigma factor is associated with the core the holoenzyme is formed, which can initiate transcription.

The protein localises to the plastid. It is found in the chloroplast. It catalyses the reaction RNA(n) + a ribonucleoside 5'-triphosphate = RNA(n+1) + diphosphate. In terms of biological role, DNA-dependent RNA polymerase catalyzes the transcription of DNA into RNA using the four ribonucleoside triphosphates as substrates. In Ranunculus macranthus (Large buttercup), this protein is DNA-directed RNA polymerase subunit alpha.